The chain runs to 466 residues: Adenylosuccinate lyase (466 aa).

Residues 21-22 (RY), 97-99 (NHD), and 130-131 (TS) contribute to the substrate site. The Proton donor/acceptor role is filled by histidine 180. Glutamine 259 provides a ligand contact to substrate. The active-site Proton donor/acceptor is the serine 307. Arginine 347, serine 352, and arginine 356 together coordinate substrate.

It belongs to the lyase 1 family. Adenylosuccinate lyase subfamily. Homotetramer. Residues from neighboring subunits contribute catalytic and substrate-binding residues to each active site.

It carries out the reaction N(6)-(1,2-dicarboxyethyl)-AMP = fumarate + AMP. It catalyses the reaction (2S)-2-[5-amino-1-(5-phospho-beta-D-ribosyl)imidazole-4-carboxamido]succinate = 5-amino-1-(5-phospho-beta-D-ribosyl)imidazole-4-carboxamide + fumarate. The protein operates within purine metabolism; AMP biosynthesis via de novo pathway; AMP from IMP: step 2/2. It functions in the pathway purine metabolism; IMP biosynthesis via de novo pathway; 5-amino-1-(5-phospho-D-ribosyl)imidazole-4-carboxamide from 5-amino-1-(5-phospho-D-ribosyl)imidazole-4-carboxylate: step 2/2. This chain is Adenylosuccinate lyase (purB), found in Dictyostelium discoideum (Social amoeba).